The chain runs to 470 residues: Light-independent protochlorophyllide reductase subunit N (470 aa).

Cys24, Cys49, and Cys109 together coordinate [4Fe-4S] cluster.

Belongs to the BchN/ChlN family. In terms of assembly, protochlorophyllide reductase is composed of three subunits; ChlL, ChlN and ChlB. Forms a heterotetramer of two ChlB and two ChlN subunits. Requires [4Fe-4S] cluster as cofactor.

The enzyme catalyses chlorophyllide a + oxidized 2[4Fe-4S]-[ferredoxin] + 2 ADP + 2 phosphate = protochlorophyllide a + reduced 2[4Fe-4S]-[ferredoxin] + 2 ATP + 2 H2O. It functions in the pathway porphyrin-containing compound metabolism; chlorophyll biosynthesis (light-independent). Its function is as follows. Component of the dark-operative protochlorophyllide reductase (DPOR) that uses Mg-ATP and reduced ferredoxin to reduce ring D of protochlorophyllide (Pchlide) to form chlorophyllide a (Chlide). This reaction is light-independent. The NB-protein (ChlN-ChlB) is the catalytic component of the complex. In Acaryochloris marina (strain MBIC 11017), this protein is Light-independent protochlorophyllide reductase subunit N.